Here is a 121-residue protein sequence, read N- to C-terminus: Basic phospholipase A2 homolog AppP2 (121 aa).

Disulfide bonds link cysteine 26–cysteine 115, cysteine 28–cysteine 44, cysteine 43–cysteine 95, cysteine 49–cysteine 121, cysteine 50–cysteine 88, cysteine 57–cysteine 81, and cysteine 75–cysteine 86. The important for membrane-damaging activities in eukaryotes and bacteria; heparin-binding stretch occupies residues 105-117; that stretch reads KKYKAYFKLKCKK.

It belongs to the phospholipase A2 family. Group II subfamily. K49 sub-subfamily. In terms of assembly, monomer. As to expression, expressed by the venom gland.

It is found in the secreted. Its function is as follows. Snake venom phospholipase A2 (PLA2) that lacks enzymatic activity. Displays edema-inducing activities. Is myotoxic. A model of myotoxic mechanism has been proposed: an apo Lys49-PLA2 is activated by the entrance of a hydrophobic molecule (e.g. fatty acid) at the hydrophobic channel of the protein leading to a reorientation of a monomer. This reorientation causes a transition between 'inactive' to 'active' states, causing alignment of C-terminal and membrane-docking sites (MDoS) side-by-side and putting the membrane-disruption sites (MDiS) in the same plane, exposed to solvent and in a symmetric position for both monomers. The MDoS region stabilizes the toxin on membrane by the interaction of charged residues with phospholipid head groups. Subsequently, the MDiS region destabilizes the membrane with penetration of hydrophobic residues. This insertion causes a disorganization of the membrane, allowing an uncontrolled influx of ions (i.e. calcium and sodium), and eventually triggering irreversible intracellular alterations and cell death. This Agkistrodon piscivorus piscivorus (Eastern cottonmouth) protein is Basic phospholipase A2 homolog AppP2.